A 133-amino-acid chain; its full sequence is Phosphoribosyl-AMP cyclohydrolase (133 aa).

Mg(2+) is bound at residue Asp77. Cys78 lines the Zn(2+) pocket. The Mg(2+) site is built by Asp79 and Asp81. Zn(2+)-binding residues include Cys95 and Cys102.

It belongs to the PRA-CH family. Homodimer. Mg(2+) is required as a cofactor. The cofactor is Zn(2+).

Its subcellular location is the cytoplasm. The enzyme catalyses 1-(5-phospho-beta-D-ribosyl)-5'-AMP + H2O = 1-(5-phospho-beta-D-ribosyl)-5-[(5-phospho-beta-D-ribosylamino)methylideneamino]imidazole-4-carboxamide. The protein operates within amino-acid biosynthesis; L-histidine biosynthesis; L-histidine from 5-phospho-alpha-D-ribose 1-diphosphate: step 3/9. Catalyzes the hydrolysis of the adenine ring of phosphoribosyl-AMP. This is Phosphoribosyl-AMP cyclohydrolase from Pseudomonas fluorescens (strain Pf0-1).